The sequence spans 207 residues: dTTP/UTP pyrophosphatase (207 aa).

The active-site Proton acceptor is the Asp-79.

It belongs to the Maf family. YhdE subfamily. It depends on a divalent metal cation as a cofactor.

The protein localises to the cytoplasm. It catalyses the reaction dTTP + H2O = dTMP + diphosphate + H(+). It carries out the reaction UTP + H2O = UMP + diphosphate + H(+). Nucleoside triphosphate pyrophosphatase that hydrolyzes dTTP and UTP. May have a dual role in cell division arrest and in preventing the incorporation of modified nucleotides into cellular nucleic acids. The protein is dTTP/UTP pyrophosphatase of Nitrobacter hamburgensis (strain DSM 10229 / NCIMB 13809 / X14).